The following is a 341-amino-acid chain: uncharacterized protein (341 aa).

10 helical membrane passes run 10-30 (ALGVVLLLFVVFLWLISSFLT), 42-62 (PFLITYINTGTFVFYLIPWYF), 107-127 (LGFCIIWFAANYFSNSSLGFT), 129-149 (VASFTIISSMSGFFTLGLGTI), 155-175 (FTLSKLLALMASVGGVIIVVT), 192-212 (ALGNAYALLAALLYGCYSVMV), 226-246 (LFFGLVGLFDLILLWPFLIIL), 263-283 (LIVLIINASITFVSDYLWVIA), 290-310 (LLVTVGMSLSIPLALFFDILL), and 313-333 (HYLNFSLILGSLLVFAGFIVV).

The protein belongs to the TPT transporter family.

Its subcellular location is the vacuole membrane. It localises to the golgi apparatus membrane. This is an uncharacterized protein from Schizosaccharomyces pombe (strain 972 / ATCC 24843) (Fission yeast).